Here is a 452-residue protein sequence, read N- to C-terminus: Probable receptor-like protein kinase At5g20050 (452 aa).

Residues 1–23 (MEDKKANIIATILILALVVVIIA) form the signal peptide. Residues 24 to 33 (ARVSLKLSKT) lie on the Extracellular side of the membrane. The chain crosses the membrane as a helical span at residues 34 to 54 (FYLIAGVDISLILAVICFLII). Residues 55–452 (RSRYNKERKL…SSIISPISPR (398 aa)) are Cytoplasmic-facing. The Protein kinase domain occupies 103–392 (DGFRSLIGKG…MVIEMLEGRV (290 aa)). ATP is bound by residues 109–117 (IGKGGSGSV) and Lys-131. Tyr-178 carries the post-translational modification Phosphotyrosine. Residue Asp-236 is the Proton acceptor of the active site. Residues Thr-270 and Thr-275 each carry the phosphothreonine modification.

Belongs to the protein kinase superfamily. Ser/Thr protein kinase family.

The protein localises to the membrane. The enzyme catalyses L-seryl-[protein] + ATP = O-phospho-L-seryl-[protein] + ADP + H(+). It catalyses the reaction L-threonyl-[protein] + ATP = O-phospho-L-threonyl-[protein] + ADP + H(+). The polypeptide is Probable receptor-like protein kinase At5g20050 (Arabidopsis thaliana (Mouse-ear cress)).